The sequence spans 298 residues: Spermidine synthase (298 aa).

The 236-residue stretch at D13–K248 folds into the PABS domain. Q44 serves as a coordination point for S-adenosyl 3-(methylsulfanyl)propylamine. Residue Y74 participates in putrescine binding. S-adenosyl 3-(methylsulfanyl)propylamine contacts are provided by residues Q75, D99, D119, D150–G151, and D168. D168 (proton acceptor) is an active-site residue. Residues D168–D171 and Y236 contribute to the putrescine site.

The protein belongs to the spermidine/spermine synthase family.

The catalysed reaction is S-adenosyl 3-(methylsulfanyl)propylamine + putrescine = S-methyl-5'-thioadenosine + spermidine + H(+). It functions in the pathway amine and polyamine biosynthesis; spermidine biosynthesis; spermidine from putrescine: step 1/1. This chain is Spermidine synthase, found in Schizosaccharomyces pombe (strain 972 / ATCC 24843) (Fission yeast).